The following is a 453-amino-acid chain: UDP-N-acetylmuramoylalanine--D-glutamate ligase (453 aa).

117-123 (GANGKST) contacts ATP.

The protein belongs to the MurCDEF family.

Its subcellular location is the cytoplasm. The enzyme catalyses UDP-N-acetyl-alpha-D-muramoyl-L-alanine + D-glutamate + ATP = UDP-N-acetyl-alpha-D-muramoyl-L-alanyl-D-glutamate + ADP + phosphate + H(+). The protein operates within cell wall biogenesis; peptidoglycan biosynthesis. In terms of biological role, cell wall formation. Catalyzes the addition of glutamate to the nucleotide precursor UDP-N-acetylmuramoyl-L-alanine (UMA). The sequence is that of UDP-N-acetylmuramoylalanine--D-glutamate ligase from Methylobacillus flagellatus (strain ATCC 51484 / DSM 6875 / VKM B-1610 / KT).